Consider the following 77-residue polypeptide: Small ribosomal subunit protein bS18 (77 aa).

The protein belongs to the bacterial ribosomal protein bS18 family. As to quaternary structure, part of the 30S ribosomal subunit. Forms a tight heterodimer with protein bS6.

In terms of biological role, binds as a heterodimer with protein bS6 to the central domain of the 16S rRNA, where it helps stabilize the platform of the 30S subunit. This chain is Small ribosomal subunit protein bS18, found in Shouchella clausii (strain KSM-K16) (Alkalihalobacillus clausii).